A 312-amino-acid polypeptide reads, in one-letter code: Isochorismatase (312 aa).

The region spanning 229-302 (VFTCENIRKQ…EWQKLLTTRS (74 aa)) is the Carrier domain. Serine 263 is modified (O-(pantetheine 4'-phosphoryl)serine).

Belongs to the isochorismatase family.

The enzyme catalyses isochorismate + H2O = (2S,3S)-2,3-dihydroxy-2,3-dihydrobenzoate + pyruvate. It participates in siderophore biosynthesis; bacillibactin biosynthesis. This chain is Isochorismatase (dhbB), found in Bacillus subtilis (strain 168).